The primary structure comprises 223 residues: TMF-regulated nuclear protein 1 (223 aa).

Disordered regions lie at residues 1-84 (MPGC…GPAG) and 196-223 (GRLR…SPQR). Residues 21–54 (GSPPPPPREPLPSLQPPSPSPTSTPTPTKSPPLP) show a composition bias toward pro residues. Residues 73 to 84 (ASGGSGGAGPAG) are compositionally biased toward gly residues.

In terms of assembly, interacts with TMF1; may regulate TRNP1 proteasomal degradation. Post-translationally, ubiquitinated, leading to its degradation by the proteasome. As to expression, expressed in brain and kidney (at protein level). Also detected in spleen and intestine.

The protein localises to the nucleus. Its function is as follows. DNA-binding factor that regulates the expression of a subset of genes and plays a key role in tangential, radial, and lateral expansion of the brain neocortex. Regulates neural stem cells proliferation and the production of intermediate neural progenitors and basal radial glial cells affecting the process of cerebral cortex gyrification. May control the proliferation rate of cells by regulating their progression through key cell-cycle transition points. This is TMF-regulated nuclear protein 1 (Trnp1) from Mus musculus (Mouse).